The chain runs to 117 residues: MIYGIGIDITNIDRFKALHNPTSFIKKVLTDKEQAELAGKSGQRAYEFLAGHFSVKESYSKAYGTGLGKKLNFQDIEVEYDDNGRPVISNHPFAGVAHVSISHSKHHVVTQVILEGD.

Mg(2+) is bound by residues Asp8 and Glu57.

Belongs to the P-Pant transferase superfamily. AcpS family. Mg(2+) is required as a cofactor.

It localises to the cytoplasm. The catalysed reaction is apo-[ACP] + CoA = holo-[ACP] + adenosine 3',5'-bisphosphate + H(+). Transfers the 4'-phosphopantetheine moiety from coenzyme A to a Ser of acyl-carrier-protein. The protein is Holo-[acyl-carrier-protein] synthase of Limosilactobacillus reuteri (Lactobacillus reuteri).